The primary structure comprises 514 residues: Phospholipase C D (514 aa).

The tat-type signal signal peptide spans 1–37; the sequence is MSQSHIGGVSRREFLAKVAAGGAGALMSFAGPVIEKA. A disordered region spans residues 492–514; it reads VPDPQIMPTQETTPTRGIPSGPC.

Belongs to the bacterial phospholipase C family. Post-translationally, predicted to be exported by the Tat system. The position of the signal peptide cleavage has not been experimentally proven.

Its subcellular location is the secreted. It is found in the cell wall. The enzyme catalyses a 1,2-diacyl-sn-glycero-3-phosphocholine + H2O = phosphocholine + a 1,2-diacyl-sn-glycerol + H(+). Involved in virulence. Induces cytotoxic effects on mouse macrophage cell lines, via direct or indirect enzymatic hydrolysis of cell membrane phospholipids. Hydrolyzes phosphatidylcholine. The sequence is that of Phospholipase C D from Mycobacterium tuberculosis (strain CDC 1551 / Oshkosh).